We begin with the raw amino-acid sequence, 418 residues long: Probable endo-beta-1,4-glucanase celB (418 aa).

Positions 1–18 (MVRTFAVTALALLPLVAA) are cleaved as a signal peptide. N-linked (GlcNAc...) asparagine glycans are attached at residues asparagine 46, asparagine 118, and asparagine 136. Catalysis depends on glutamate 215, which acts as the Nucleophile. The active-site Proton donor is the glutamate 220. Asparagine 234 and asparagine 291 each carry an N-linked (GlcNAc...) asparagine glycan.

Belongs to the glycosyl hydrolase 7 (cellulase C) family.

It is found in the secreted. The catalysed reaction is Endohydrolysis of (1-&gt;4)-beta-D-glucosidic linkages in cellulose, lichenin and cereal beta-D-glucans.. Its function is as follows. Has endoglucanase activity on substrates containing beta-1,4 glycosidic bonds, like in carboxymethylcellulose (CMC), hydroxyethylcellulose (HEC) and beta-glucan. Involved in the degradation of complex natural cellulosic substrates. The sequence is that of Probable endo-beta-1,4-glucanase celB (celB) from Aspergillus clavatus (strain ATCC 1007 / CBS 513.65 / DSM 816 / NCTC 3887 / NRRL 1 / QM 1276 / 107).